The sequence spans 663 residues: Polyunsaturated fatty acid lipoxygenase ALOX12 (663 aa).

The region spanning 2–114 (GRYRVRVVTG…ILSLPEGTAR (113 aa)) is the PLAT domain. One can recognise a Lipoxygenase domain in the interval 115–663 (LAGDNALDVF…PSRIENSITI (549 aa)). S246 carries the post-translational modification Phosphoserine. Residues H360, H365, H540, N544, and I663 each contribute to the Fe cation site.

Belongs to the lipoxygenase family. The cofactor is Fe cation. In terms of tissue distribution, found primarily in platelets and in microsomal and cytosolic fractions of the epidermis (at protein level).

It is found in the cytoplasm. The protein resides in the cytosol. Its subcellular location is the membrane. It catalyses the reaction (5Z,8Z,11Z,14Z)-eicosatetraenoate + O2 = (12S)-hydroperoxy-(5Z,8Z,10E,14Z)-eicosatetraenoate. The enzyme catalyses (9Z,12Z)-octadecadienoate + O2 = (13S)-hydroperoxy-(9Z,11E)-octadecadienoate. The catalysed reaction is 2 leukotriene A4 + O2 + 2 H2O = 2 lipoxin A4. It carries out the reaction 2 leukotriene A4 + O2 + 2 H2O = 2 lipoxin B4. It catalyses the reaction (5Z,8Z,11Z)-eicosatrienoate + O2 = (12S)-hydroperoxy-(5Z,8Z,10E)-eicosatrienoate. The enzyme catalyses (8Z,11Z,14Z)-eicosatrienoate + O2 = (12S)-hydroperoxy-(8Z,10E,14Z)-eicosatrienoate. The catalysed reaction is (4Z,7Z,10Z,13Z,16Z,19Z)-docosahexaenoate + O2 = (14S)-hydroperoxy-(4Z,7Z,10Z,12E,16Z,19Z)-docosahexaenoate. It carries out the reaction (7S)-hydroperoxy-(4Z,8E,10Z,13Z,16Z,19Z)-docosahexaenoate + O2 = (7S,14S)-dihydroperoxy-(4Z,8E,10Z,12E,16Z,19Z)-docosahexaenoate. It catalyses the reaction (7S)-hydroperoxy-(4Z,8E,10Z,13Z,16Z,19Z)-docosahexaenoate + O2 = (7S,17S)-dihydroperoxy-(4Z,8E,10Z,13Z,15E,19Z)-docosahexaenoate. The enzyme catalyses (14R,15S)-epoxy-(5Z,8Z,11Z)-eicosatrienoate + O2 = (12S)-hydroperoxy-(14R,15S)-epoxy-(5Z,8Z,10E)-eicosatrienoate. The catalysed reaction is (14S,15R)-epoxy-(5Z,8Z,11Z)-eicosatrienoate + O2 = (12S)-hydroperoxy-(14S,15R)-epoxy-(5Z,8Z,10E)-eicosatrienoate. It carries out the reaction (5Z,8Z,11Z,14Z)-eicosatetraenoate + O2 = (15S)-hydroperoxy-(5Z,8Z,11Z,13E)-eicosatetraenoate. It catalyses the reaction (14S)-hydroperoxy-(4Z,7Z,10Z,12E,16Z,19Z)-docosahexaenoate = (13S,14S)-epoxy-(4Z,7Z,9E,11E,16Z,19Z)-docosahexaenoate + H2O. The enzyme catalyses N-(5Z,8Z,11Z,14Z)-eicosatetraenoyl-L-alanine + O2 = N-(15S)-hydroperoxy-(5Z,8Z,11Z,13E)-eicosatetraenoyl-alanine. The catalysed reaction is N-(5Z,8Z,11Z,14Z)-eicosatetraenoyl-L-alanine + O2 = N-(12S)-hydroperoxy-(5Z,8Z,10E,14Z)-eicosatetraenoyl-alanine. It carries out the reaction N-(5Z,8Z,11Z,14Z)-eicosatetraenoyl-gamma-aminobutanoate + O2 = N-(15S)-hydroperoxy-(5Z,8Z,11Z,13E)-eicosatetraenoyl-gamma-aminobutanoate. It catalyses the reaction N-(5Z,8Z,11Z,14Z)-eicosatetraenoyl-gamma-aminobutanoate + O2 = N-(12S)-hydroperoxy-(5Z,8Z,10E,14Z)-eicosatetraenoyl-gamma-aminobutanoate. The enzyme catalyses N-(5Z,8Z,11Z,14Z)-eicosatetraenoyl-glycine + O2 = N-(15S)-hydroperoxy-(5Z,8Z,11Z,13E)-eicosatetraenoyl-glycine. The catalysed reaction is N-(5Z,8Z,11Z,14Z)-eicosatetraenoyl-glycine + O2 = N-(12S)-hydroperoxy-(5Z,8Z,10E,14Z)-eicosatetraenoyl-glycine. It carries out the reaction N-(5Z,8Z,11Z,14Z)-eicosatetraenoyl-taurine + O2 = N-(12S)-hydroperoxy-(5Z,8Z,10E,14Z)-eicosatetraenoyl-taurine. It catalyses the reaction N-(5Z,8Z,11Z,14Z)-eicosatetraenoyl-taurine + O2 = N-(15S)-hydroperoxy-(5Z,8Z,11Z,13E)-eicosatetraenoyl-taurine. The enzyme catalyses (5Z,8Z,11Z,14Z,17Z)-eicosapentaenoate + O2 = (12S)-hydroperoxy-(5Z,8Z,10E,14Z,17Z)-eicosapentaenoate. It participates in lipid metabolism; hydroperoxy eicosatetraenoic acid biosynthesis. Its activity is regulated as follows. Activated by EGF. Arachidonic acid conversion is inhibited by (13S,14S)-epoxy-(4Z,7Z,9E,11E,16Z,19Z)-docosahexaenoate (13S,14S-epoxy-DHA). Arachidonate 12-lipoxygenase activity is decreased when PH decreases from 7.4 to 6. Its function is as follows. Catalyzes the regio and stereo-specific incorporation of molecular oxygen into free and esterified polyunsaturated fatty acids generating lipid hydroperoxides that can be further reduced to the corresponding hydroxy species. Mainly converts arachidonate ((5Z,8Z,11Z,14Z)-eicosatetraenoate) to the specific bioactive lipid (12S)-hydroperoxyeicosatetraenoate/(12S)-HPETE. Through the production of bioactive lipids like (12S)-HPETE it regulates different biological processes including platelet activation. It can also catalyze the epoxidation of double bonds of polyunsaturated fatty acids such as (14S)-hydroperoxy-docosahexaenoate/(14S)-HPDHA resulting in the formation of (13S,14S)-epoxy-DHA. Furthermore, it may participate in the sequential oxidations of DHA ((4Z,7Z,10Z,13Z,16Z,19Z)-docosahexaenoate) to generate specialized pro-resolving mediators (SPMs) like resolvin D5 ((7S,17S)-diHPDHA) and (7S,14S)-diHPDHA, that actively down-regulate the immune response and have anti-aggregation properties with platelets. An additional function involves a multistep process by which it transforms leukotriene A4/LTA4 into the bioactive lipids lipoxin A4/LXA4 and lipoxin B4/LXB4, both are vasoactive and LXA4 may regulate neutrophil function via occupancy of specific recognition sites. Can also peroxidize linoleate ((9Z,12Z)-octadecadienoate) to (13S)-hydroperoxyoctadecadienoate/ (13S-HPODE). Due to its role in regulating both the expression of the vascular endothelial growth factor (VEGF, an angiogenic factor involved in the survival and metastasis of solid tumors) and the expression of integrin beta-1 (known to affect tumor cell migration and proliferation), it can be regarded as protumorigenic. Important for cell survival, as it may play a role not only in proliferation but also in the prevention of apoptosis in vascular smooth muscle cells. This Mus musculus (Mouse) protein is Polyunsaturated fatty acid lipoxygenase ALOX12 (Alox12).